We begin with the raw amino-acid sequence, 259 residues long: Thiazole synthase (259 aa).

Lys-99 functions as the Schiff-base intermediate with DXP in the catalytic mechanism. 1-deoxy-D-xylulose 5-phosphate contacts are provided by residues Gly-161, 187–188 (AG), and 209–210 (NT).

Belongs to the ThiG family. As to quaternary structure, homotetramer. Forms heterodimers with either ThiH or ThiS.

The protein localises to the cytoplasm. It carries out the reaction [ThiS sulfur-carrier protein]-C-terminal-Gly-aminoethanethioate + 2-iminoacetate + 1-deoxy-D-xylulose 5-phosphate = [ThiS sulfur-carrier protein]-C-terminal Gly-Gly + 2-[(2R,5Z)-2-carboxy-4-methylthiazol-5(2H)-ylidene]ethyl phosphate + 2 H2O + H(+). The protein operates within cofactor biosynthesis; thiamine diphosphate biosynthesis. Its function is as follows. Catalyzes the rearrangement of 1-deoxy-D-xylulose 5-phosphate (DXP) to produce the thiazole phosphate moiety of thiamine. Sulfur is provided by the thiocarboxylate moiety of the carrier protein ThiS. In vitro, sulfur can be provided by H(2)S. The chain is Thiazole synthase from Nautilia profundicola (strain ATCC BAA-1463 / DSM 18972 / AmH).